Reading from the N-terminus, the 326-residue chain is Tagatose 1,6-diphosphate aldolase (326 aa).

This sequence belongs to the aldolase LacD family.

It carries out the reaction D-tagatofuranose 1,6-bisphosphate = D-glyceraldehyde 3-phosphate + dihydroxyacetone phosphate. It functions in the pathway carbohydrate metabolism; D-tagatose 6-phosphate degradation; D-glyceraldehyde 3-phosphate and glycerone phosphate from D-tagatose 6-phosphate: step 2/2. The sequence is that of Tagatose 1,6-diphosphate aldolase from Staphylococcus aureus (strain MSSA476).